Reading from the N-terminus, the 757-residue chain is Serine/threonine-protein phosphatase 2A 56 kDa regulatory subunit delta isoform (757 aa).

Over residues 1 to 11 (MMRGFKQRLIK) the composition is skewed to basic residues. 2 disordered regions span residues 1–172 (MMRG…EDHA) and 188–250 (ISNA…NPDT). The segment covering 12 to 21 (KTTGSSSSSS) has biased composition (low complexity). The span at 23–34 (KKKDKEKEKEKS) shows a compositional bias: basic and acidic residues. Composition is skewed to low complexity over residues 35-66 (STTSSTSKKPASASSSSHGTTHSSASSTGSKS), 86-119 (SSTSKTKTATTPSSSSSSSRSSSVSRSGSSSTKK), and 128-147 (QSKQSQQPSQSQKQGSSSSS). Basic and acidic residues predominate over residues 160–172 (TKDDKSTSGEDHA). The segment covering 197 to 216 (SSDVENGNSNNNNMNINTSN) has biased composition (low complexity). Residues 217 to 228 (TQDANHASSQSI) are compositionally biased toward polar residues. Phosphothreonine occurs at positions 242 and 257. The segment at 734–757 (SFNTASENNTLNEENENDCDSEIQ) is disordered. Acidic residues predominate over residues 746–757 (EENENDCDSEIQ).

The protein belongs to the phosphatase 2A regulatory subunit B family. As to quaternary structure, PP2A consists of a common heterodimeric core enzyme, composed of a 36 kDa catalytic subunit (subunit C) and a 65 kDa constant regulatory subunit (PR65 or subunit A), that associates with a variety of regulatory subunits. Proteins that associate with the core dimer include three families of regulatory subunits B (the R2/B/PR55/B55, R3/B''/PR72/PR130/PR59 and R5/B'/B56 families), the 48 kDa variable regulatory subunit, viral proteins, and cell signaling molecules.

It is found in the cytoplasm. It localises to the nucleus. In terms of biological role, the B regulatory subunit might modulate substrate selectivity and catalytic activity, and might also direct the localization of the catalytic enzyme to a particular subcellular compartment. Functionally, multicopy suppressor of ROX3 and HSP60. This chain is Serine/threonine-protein phosphatase 2A 56 kDa regulatory subunit delta isoform (RTS1), found in Saccharomyces cerevisiae (strain ATCC 204508 / S288c) (Baker's yeast).